The chain runs to 88 residues: UPF0237 protein spr0217 (88 aa).

In terms of domain architecture, ACT spans 4-77 (IITVVGKDKS…QTLNVKINIQ (74 aa)).

This sequence belongs to the UPF0237 family. In terms of assembly, homodimer.

In Streptococcus pneumoniae (strain ATCC BAA-255 / R6), this protein is UPF0237 protein spr0217.